Consider the following 552-residue polypeptide: Hydroxylamine reductase (552 aa).

[2Fe-2S] cluster contacts are provided by Cys-5, Cys-8, Cys-20, and Cys-27. Hybrid [4Fe-2O-2S] cluster-binding residues include His-251, Glu-275, Cys-319, Cys-407, Cys-435, Cys-460, Glu-494, and Lys-496. The residue at position 407 (Cys-407) is a Cysteine persulfide.

The protein belongs to the HCP family. [2Fe-2S] cluster serves as cofactor. The cofactor is hybrid [4Fe-2O-2S] cluster.

The protein resides in the cytoplasm. It carries out the reaction A + NH4(+) + H2O = hydroxylamine + AH2 + H(+). Catalyzes the reduction of hydroxylamine to form NH(3) and H(2)O. The sequence is that of Hydroxylamine reductase from Shigella boydii serotype 4 (strain Sb227).